Consider the following 190-residue polypeptide: uncharacterized protein (190 aa).

A signal peptide spans 1–28 (MEFSLQYITIFIFVILFLIGLFSSKSRS).

This is an uncharacterized protein from Haemophilus influenzae (strain ATCC 51907 / DSM 11121 / KW20 / Rd).